A 420-amino-acid polypeptide reads, in one-letter code: Serine hydroxymethyltransferase (420 aa).

Residues Leu-121 and 125–127 contribute to the (6S)-5,6,7,8-tetrahydrofolate site; that span reads GHL. N6-(pyridoxal phosphate)lysine is present on Lys-230. Residues Glu-246 and 354-356 each bind (6S)-5,6,7,8-tetrahydrofolate; that span reads SPF.

This sequence belongs to the SHMT family. Homodimer. Pyridoxal 5'-phosphate serves as cofactor.

The protein localises to the cytoplasm. It carries out the reaction (6R)-5,10-methylene-5,6,7,8-tetrahydrofolate + glycine + H2O = (6S)-5,6,7,8-tetrahydrofolate + L-serine. It participates in one-carbon metabolism; tetrahydrofolate interconversion. Its pathway is amino-acid biosynthesis; glycine biosynthesis; glycine from L-serine: step 1/1. In terms of biological role, catalyzes the reversible interconversion of serine and glycine with tetrahydrofolate (THF) serving as the one-carbon carrier. This reaction serves as the major source of one-carbon groups required for the biosynthesis of purines, thymidylate, methionine, and other important biomolecules. Also exhibits THF-independent aldolase activity toward beta-hydroxyamino acids, producing glycine and aldehydes, via a retro-aldol mechanism. The protein is Serine hydroxymethyltransferase of Rickettsia massiliae (strain Mtu5).